The sequence spans 131 residues: L-ectoine synthase (131 aa).

It belongs to the ectoine synthase family.

It carries out the reaction (2S)-4-acetamido-2-aminobutanoate = L-ectoine + H2O. The protein operates within amine and polyamine biosynthesis; ectoine biosynthesis; L-ectoine from L-aspartate 4-semialdehyde: step 3/3. Its function is as follows. Catalyzes the circularization of gamma-N-acetyl-alpha,gamma-diaminobutyric acid (ADABA) to ectoine (1,4,5,6-tetrahydro-2-methyl-4-pyrimidine carboxylic acid), which is an excellent osmoprotectant. The protein is L-ectoine synthase of Wolinella succinogenes (strain ATCC 29543 / DSM 1740 / CCUG 13145 / JCM 31913 / LMG 7466 / NCTC 11488 / FDC 602W) (Vibrio succinogenes).